Here is a 335-residue protein sequence, read N- to C-terminus: Ketol-acid reductoisomerase (NADP(+)) (335 aa).

The 181-residue stretch at serine 5–threonine 185 folds into the KARI N-terminal Rossmann domain. NADP(+) is bound by residues tyrosine 28 to glutamine 31, serine 56, and aspartate 86 to glutamine 89. Residue histidine 111 is part of the active site. Residue glycine 137 participates in NADP(+) binding. The 146-residue stretch at threonine 186 to glycine 331 folds into the KARI C-terminal knotted domain. Aspartate 194, glutamate 198, glutamate 230, and glutamate 234 together coordinate Mg(2+). Residue serine 255 coordinates substrate.

The protein belongs to the ketol-acid reductoisomerase family. Mg(2+) is required as a cofactor.

The catalysed reaction is (2R)-2,3-dihydroxy-3-methylbutanoate + NADP(+) = (2S)-2-acetolactate + NADPH + H(+). The enzyme catalyses (2R,3R)-2,3-dihydroxy-3-methylpentanoate + NADP(+) = (S)-2-ethyl-2-hydroxy-3-oxobutanoate + NADPH + H(+). Its pathway is amino-acid biosynthesis; L-isoleucine biosynthesis; L-isoleucine from 2-oxobutanoate: step 2/4. It participates in amino-acid biosynthesis; L-valine biosynthesis; L-valine from pyruvate: step 2/4. Involved in the biosynthesis of branched-chain amino acids (BCAA). Catalyzes an alkyl-migration followed by a ketol-acid reduction of (S)-2-acetolactate (S2AL) to yield (R)-2,3-dihydroxy-isovalerate. In the isomerase reaction, S2AL is rearranged via a Mg-dependent methyl migration to produce 3-hydroxy-3-methyl-2-ketobutyrate (HMKB). In the reductase reaction, this 2-ketoacid undergoes a metal-dependent reduction by NADPH to yield (R)-2,3-dihydroxy-isovalerate. The polypeptide is Ketol-acid reductoisomerase (NADP(+)) (Saccharolobus islandicus (strain M.16.27) (Sulfolobus islandicus)).